A 263-amino-acid chain; its full sequence is Type III pantothenate kinase (263 aa).

14-21 (DIGNTSVN) is a binding site for ATP. Residue 115-118 (GADR) participates in substrate binding. Catalysis depends on Asp-117, which acts as the Proton acceptor. Asp-137 is a binding site for K(+). Thr-140 is a binding site for ATP. Thr-192 contacts substrate.

This sequence belongs to the type III pantothenate kinase family. Homodimer. It depends on NH4(+) as a cofactor. K(+) serves as cofactor.

It localises to the cytoplasm. The enzyme catalyses (R)-pantothenate + ATP = (R)-4'-phosphopantothenate + ADP + H(+). It participates in cofactor biosynthesis; coenzyme A biosynthesis; CoA from (R)-pantothenate: step 1/5. Its function is as follows. Catalyzes the phosphorylation of pantothenate (Pan), the first step in CoA biosynthesis. The sequence is that of Type III pantothenate kinase from Dehalococcoides mccartyi (strain CBDB1).